A 1162-amino-acid polypeptide reads, in one-letter code: DNA-directed RNA polymerase subunit beta (1162 aa).

The protein belongs to the RNA polymerase beta chain family. As to quaternary structure, the RNAP catalytic core consists of 2 alpha, 1 beta, 1 beta' and 1 omega subunit. When a sigma factor is associated with the core the holoenzyme is formed, which can initiate transcription.

It carries out the reaction RNA(n) + a ribonucleoside 5'-triphosphate = RNA(n+1) + diphosphate. Functionally, DNA-dependent RNA polymerase catalyzes the transcription of DNA into RNA using the four ribonucleoside triphosphates as substrates. In Clavibacter michiganensis subsp. michiganensis (strain NCPPB 382), this protein is DNA-directed RNA polymerase subunit beta.